The chain runs to 249 residues: MKIIISPARTMQVDTDSLLYKDLPEFLQQTKDILGWMRSLSYDELHKVWGNCSSRLAMKNYQWLQQMDLQRKLTPAIIAFTGLQYQYMAPSVFSEDGLKYVQDNLRILSGFYGILRPFDGIIPYRLGMGDMAPVNGYKNLYDFWGEQLYHELYKNNDLVISLASVEYEKAITPYLQTQDRFIKCIFGEEINGKIKQKATLAKMARGNMVRYLAENQIQTIEGVKQFNIGGYRFREDLSTDEKLVFELVK.

This sequence belongs to the UPF0246 family.

This chain is UPF0246 protein Lreu_0493, found in Limosilactobacillus reuteri (strain DSM 20016) (Lactobacillus reuteri).